Consider the following 1025-residue polypeptide: Multidrug resistance protein MdtC (1025 aa).

The next 12 membrane-spanning stretches (helical) occupy residues phenylalanine 3–leucine 23, glutamate 333–leucine 353, isoleucine 360–cysteine 380, leucine 387–leucine 407, valine 431–leucine 451, phenylalanine 463–proline 483, leucine 528–proline 548, valine 853–serine 873, valine 875–leucine 895, leucine 897–valine 917, proline 953–glycine 973, and isoleucine 984–valine 1004.

It belongs to the resistance-nodulation-cell division (RND) (TC 2.A.6) family. MdtC subfamily. Part of a tripartite efflux system composed of MdtA, MdtB and MdtC. MdtC forms a heteromultimer with MdtB.

It localises to the cell inner membrane. Its function is as follows. The MdtABC tripartite complex confers resistance against novobiocin and deoxycholate. This Escherichia coli O139:H28 (strain E24377A / ETEC) protein is Multidrug resistance protein MdtC.